The primary structure comprises 891 residues: Translation initiation factor IF-2 (891 aa).

A disordered region spans residues 50–303 (KKEHGSADES…TSMQHGFDKS (254 aa)). Composition is skewed to basic and acidic residues over residues 102 to 237 (TLEE…KTAD) and 245 to 261 (HARE…EQQP). One can recognise a tr-type G domain in the interval 390 to 559 (GRAPVVTIMG…LLQSEVLELT (170 aa)). Residues 399–406 (GHVDHGKT) are G1. Residue 399–406 (GHVDHGKT) coordinates GTP. The tract at residues 424-428 (GITQH) is G2. Residues 445–448 (DTPG) form a G3 region. GTP is bound by residues 445–449 (DTPGH) and 499–502 (NKID). The tract at residues 499–502 (NKID) is G4. Residues 535 to 537 (SAK) form a G5 region.

The protein belongs to the TRAFAC class translation factor GTPase superfamily. Classic translation factor GTPase family. IF-2 subfamily.

The protein localises to the cytoplasm. Functionally, one of the essential components for the initiation of protein synthesis. Protects formylmethionyl-tRNA from spontaneous hydrolysis and promotes its binding to the 30S ribosomal subunits. Also involved in the hydrolysis of GTP during the formation of the 70S ribosomal complex. This chain is Translation initiation factor IF-2, found in Aliivibrio salmonicida (strain LFI1238) (Vibrio salmonicida (strain LFI1238)).